Reading from the N-terminus, the 257-residue chain is 1-(5-phosphoribosyl)-5-[(5-phosphoribosylamino)methylideneamino] imidazole-4-carboxamide isomerase (257 aa).

The Proton acceptor role is filled by Asp-8. Asp-131 (proton donor) is an active-site residue.

The protein belongs to the HisA/HisF family.

It is found in the cytoplasm. The enzyme catalyses 1-(5-phospho-beta-D-ribosyl)-5-[(5-phospho-beta-D-ribosylamino)methylideneamino]imidazole-4-carboxamide = 5-[(5-phospho-1-deoxy-D-ribulos-1-ylimino)methylamino]-1-(5-phospho-beta-D-ribosyl)imidazole-4-carboxamide. The protein operates within amino-acid biosynthesis; L-histidine biosynthesis; L-histidine from 5-phospho-alpha-D-ribose 1-diphosphate: step 4/9. The protein is 1-(5-phosphoribosyl)-5-[(5-phosphoribosylamino)methylideneamino] imidazole-4-carboxamide isomerase of Nitrosospira multiformis (strain ATCC 25196 / NCIMB 11849 / C 71).